Consider the following 460-residue polypeptide: Cysteine--tRNA ligase (460 aa).

Position 28 (Cys28) interacts with Zn(2+). The 'HIGH' region signature appears at 30 to 40; that stretch reads MTVYDYCHLGH. Zn(2+)-binding residues include Cys209, His234, and Glu238. The short motif at 266-270 is the 'KMSKS' region element; the sequence is KMSKS. Lys269 contributes to the ATP binding site.

It belongs to the class-I aminoacyl-tRNA synthetase family. In terms of assembly, monomer. Requires Zn(2+) as cofactor.

The protein localises to the cytoplasm. It carries out the reaction tRNA(Cys) + L-cysteine + ATP = L-cysteinyl-tRNA(Cys) + AMP + diphosphate. This is Cysteine--tRNA ligase from Pseudomonas fluorescens (strain ATCC BAA-477 / NRRL B-23932 / Pf-5).